The primary structure comprises 740 residues: Phosphoribosylformylglycinamidine synthase subunit PurL (740 aa).

Residue H55 is part of the active site. 2 residues coordinate ATP: Y58 and K97. Position 99 (E99) interacts with Mg(2+). Substrate is bound by residues S100 to H103 and R122. H101 functions as the Proton acceptor in the catalytic mechanism. D123 lines the Mg(2+) pocket. Q246 is a binding site for substrate. D276 contacts Mg(2+). E320 to Q322 contacts substrate. The ATP site is built by D501 and G538. N539 contacts Mg(2+). S541 serves as a coordination point for substrate.

It belongs to the FGAMS family. Monomer. Part of the FGAM synthase complex composed of 1 PurL, 1 PurQ and 2 PurS subunits.

It is found in the cytoplasm. It carries out the reaction N(2)-formyl-N(1)-(5-phospho-beta-D-ribosyl)glycinamide + L-glutamine + ATP + H2O = 2-formamido-N(1)-(5-O-phospho-beta-D-ribosyl)acetamidine + L-glutamate + ADP + phosphate + H(+). The protein operates within purine metabolism; IMP biosynthesis via de novo pathway; 5-amino-1-(5-phospho-D-ribosyl)imidazole from N(2)-formyl-N(1)-(5-phospho-D-ribosyl)glycinamide: step 1/2. Its function is as follows. Part of the phosphoribosylformylglycinamidine synthase complex involved in the purines biosynthetic pathway. Catalyzes the ATP-dependent conversion of formylglycinamide ribonucleotide (FGAR) and glutamine to yield formylglycinamidine ribonucleotide (FGAM) and glutamate. The FGAM synthase complex is composed of three subunits. PurQ produces an ammonia molecule by converting glutamine to glutamate. PurL transfers the ammonia molecule to FGAR to form FGAM in an ATP-dependent manner. PurS interacts with PurQ and PurL and is thought to assist in the transfer of the ammonia molecule from PurQ to PurL. The protein is Phosphoribosylformylglycinamidine synthase subunit PurL of Lacticaseibacillus casei (Lactobacillus casei).